The primary structure comprises 185 residues: Heavy metal-associated isoprenylated plant protein 11 (185 aa).

Residues 39–106 enclose the HMA domain; sequence QQNTNVVFKL…ICKHVAIIAA (68 aa). A compositionally biased stretch (basic and acidic residues) spans 109 to 158; that stretch reads IREPEQNRNPVTRREPNREPEQNRSRVTRREPSREPEPNRAPLARRESRP. Positions 109 to 185 are disordered; it reads IREPEQNRNP…GENSDGCIIM (77 aa). C182 is modified (cysteine methyl ester). C182 carries the S-farnesyl cysteine lipid modification. Positions 183–185 are cleaved as a propeptide — removed in mature form; the sequence is IIM.

This sequence belongs to the HIPP family.

Functionally, probable heavy-metal-binding protein. The sequence is that of Heavy metal-associated isoprenylated plant protein 11 from Arabidopsis thaliana (Mouse-ear cress).